We begin with the raw amino-acid sequence, 464 residues long: CD-NTase-associated protein 4 (464 aa).

Residues 1 to 228 (MSASLLEKQS…FENFICHALE (228 aa)) are N-terminal endonuclease domain. The C-terminal SAVED domain stretch occupies residues 229-464 (EDRTQWLSDP…EYMPTAELNI (236 aa)).

Belongs to the Cap4 nuclease family. As to quaternary structure, a monomer in the absence of cAAA, in its presence it forms oligomers.

With respect to regulation, DNase activity is activated upon ligand binding. In terms of biological role, effector DNase of a CBASS antivirus system. CBASS (cyclic oligonucleotide-based antiphage signaling system) provides immunity against bacteriophage. The CD-NTase protein synthesizes cyclic nucleotides in response to infection; these serve as specific second messenger signals. The signals activate a diverse range of effectors, leading to bacterial cell death and thus abortive phage infection. A type II-C CBASS system. Functionally, probably in the presence of its endogenous cyclic nucleotide (synthesized by the cognate CD-NTase protein in the CBASS operon), or of 2',3',3'-cyclic AMP-AMP-AMP (cAAA) synthesized by Acinetobacter sp. ATCC 27244, endonucleolytically degrades dsDNA in a non-sequence specific manner. It is not activated by other cyclic nucleotides. This Moraxella osloensis protein is CD-NTase-associated protein 4.